Consider the following 42-residue polypeptide: Protein Tat (42 aa).

The tract at residues 1–24 is interaction with human CREBBP; that stretch reads MEPVDPNLEPWNHPGSQPKTACNQ. Positions 22–37 are cysteine-rich; the sequence is CNQCYCKKCSYHCLVC. Lysine 28 carries the N6-acetyllysine; by host PCAF modification.

This sequence belongs to the lentiviruses Tat family. As to quaternary structure, interacts with host CCNT1. Associates with the P-TEFb complex composed at least of Tat, P-TEFb (CDK9 and CCNT1), TAR RNA, RNA Pol II. Recruits the HATs CREBBP, TAF1/TFIID, EP300, PCAF and GCN5L2. Interacts with host KAT5/Tip60; this interaction targets the latter to degradation. Interacts with the host deacetylase SIRT1. Interacts with host capping enzyme RNGTT; this interaction stimulates RNGTT. Binds to host KDR, and to the host integrins ITGAV/ITGB3 and ITGA5/ITGB1. Interacts with host KPNB1/importin beta-1 without previous binding to KPNA1/importin alpha-1. Interacts with EIF2AK2. Interacts with host nucleosome assembly protein NAP1L1; this interaction may be required for the transport of Tat within the nucleus, since the two proteins interact at the nuclear rim. Interacts with host C1QBP/SF2P32; this interaction involves lysine-acetylated Tat. Interacts with the host chemokine receptors CCR2, CCR3 and CXCR4. Interacts with host DPP4/CD26; this interaction may trigger an anti-proliferative effect. Interacts with host LDLR. Interacts with the host extracellular matrix metalloproteinase MMP1. Interacts with host PRMT6; this interaction mediates Tat's methylation. Interacts with, and is ubiquitinated by MDM2/Hdm2. Interacts with host PSMC3 and HTATIP2. Interacts with STAB1; this interaction may overcome SATB1-mediated repression of IL2 and IL2RA (interleukin) in T cells by binding to the same domain than HDAC1. Interacts (when acetylated) with human CDK13, thereby increasing HIV-1 mRNA splicing and promoting the production of the doubly spliced HIV-1 protein Nef. Interacts with host TBP; this interaction modulates the activity of transcriptional pre-initiation complex. Interacts with host RELA. Interacts with host PLSCR1; this interaction negatively regulates Tat transactivation activity by altering its subcellular distribution. Post-translationally, phosphorylated by EIF2AK2 on serine and threonine residues adjacent to the basic region important for TAR RNA binding and function. Phosphorylation of Tat by EIF2AK2 is dependent on the prior activation of EIF2AK2 by dsRNA. In terms of processing, asymmetrical arginine methylation by host PRMT6 seems to diminish the transactivation capacity of Tat and affects the interaction with host CCNT1. Polyubiquitination by host MDM2 does not target Tat to degradation, but activates its transactivation function and fosters interaction with CCNT1 and TAR RNA.

The protein localises to the host nucleus. Its subcellular location is the host nucleolus. It is found in the host cytoplasm. It localises to the secreted. Functionally, transcriptional activator that increases RNA Pol II processivity, thereby increasing the level of full-length viral transcripts. Recognizes a hairpin structure at the 5'-LTR of the nascent viral mRNAs referred to as the transactivation responsive RNA element (TAR) and recruits the cyclin T1-CDK9 complex (P-TEFb complex) that will in turn hyperphosphorylate the RNA polymerase II to allow efficient elongation. The CDK9 component of P-TEFb and other Tat-activated kinases hyperphosphorylate the C-terminus of RNA Pol II that becomes stabilized and much more processive. Other factors such as HTATSF1/Tat-SF1, SUPT5H/SPT5, and HTATIP2 are also important for Tat's function. Besides its effect on RNA Pol II processivity, Tat induces chromatin remodeling of proviral genes by recruiting the histone acetyltransferases (HATs) CREBBP, EP300 and PCAF to the chromatin. This also contributes to the increase in proviral transcription rate, especially when the provirus integrates in transcriptionally silent region of the host genome. To ensure maximal activation of the LTR, Tat mediates nuclear translocation of NF-kappa-B by interacting with host RELA. Through its interaction with host TBP, Tat may also modulate transcription initiation. Tat can reactivate a latently infected cell by penetrating in it and transactivating its LTR promoter. In the cytoplasm, Tat is thought to act as a translational activator of HIV-1 mRNAs. Its function is as follows. Extracellular circulating Tat can be endocytosed by surrounding uninfected cells via the binding to several surface receptors such as CD26, CXCR4, heparan sulfate proteoglycans (HSPG) or LDLR. Neurons are rarely infected, but they internalize Tat via their LDLR. Through its interaction with nuclear HATs, Tat is potentially able to control the acetylation-dependent cellular gene expression. Modulates the expression of many cellular genes involved in cell survival, proliferation or in coding for cytokines or cytokine receptors. Tat plays a role in T-cell and neurons apoptosis. Tat induced neurotoxicity and apoptosis probably contribute to neuroAIDS. Circulating Tat also acts as a chemokine-like and/or growth factor-like molecule that binds to specific receptors on the surface of the cells, affecting many cellular pathways. In the vascular system, Tat binds to ITGAV/ITGB3 and ITGA5/ITGB1 integrins dimers at the surface of endothelial cells and competes with bFGF for heparin-binding sites, leading to an excess of soluble bFGF. This chain is Protein Tat, found in Human immunodeficiency virus type 1 group M subtype C (isolate ETH2220) (HIV-1).